Here is a 154-residue protein sequence, read N- to C-terminus: MGLSDGEWQIVLNIWGKVETDLAGHGQEVLIRLFKNHPETLDKFDKFKHLKTEDEMKGSEDLKKHGNTVLTALGGILKKKGHHEAELKPLAQSHATKHKIPVKYLEFISDAIIQVLQSKHSGDFHADTEAAMKKALELFRNDIAAKYKELGFQG.

A Globin domain is found at 2–148; sequence GLSDGEWQIV…FRNDIAAKYK (147 aa). Ser-4 bears the Phosphoserine mark. His-65 is a nitrite binding site. His-65 contacts O2. Position 68 is a phosphothreonine (Thr-68). His-94 provides a ligand contact to heme b.

This sequence belongs to the globin family. Monomeric.

It is found in the cytoplasm. The protein resides in the sarcoplasm. It catalyses the reaction Fe(III)-heme b-[protein] + nitric oxide + H2O = Fe(II)-heme b-[protein] + nitrite + 2 H(+). It carries out the reaction H2O2 + AH2 = A + 2 H2O. Functionally, monomeric heme protein which primary function is to store oxygen and facilitate its diffusion within muscle tissues. Reversibly binds oxygen through a pentacoordinated heme iron and enables its timely and efficient release as needed during periods of heightened demand. Depending on the oxidative conditions of tissues and cells, and in addition to its ability to bind oxygen, it also has a nitrite reductase activity whereby it regulates the production of bioactive nitric oxide. Under stress conditions, like hypoxia and anoxia, it also protects cells against reactive oxygen species thanks to its pseudoperoxidase activity. The chain is Myoglobin (MB) from Canis lupus familiaris (Dog).